A 227-amino-acid chain; its full sequence is Cell wall mannoprotein CIS3 (227 aa).

Residues 1-21 form the signal peptide; the sequence is MQFKNVALAASVAALSATASA. Positions 22-64 are excised as a propeptide; that stretch reads EGYTPGEPWSTLTPTGSISCGAAEYTTTFGIAVQAITSSKAKR. A PIR1/2/3 repeat occupies 65–78; sequence DVISQIGDGQVQAT. O-linked (Man) serine glycosylation occurs at Ser68. Thr78 carries O-linked (Man) threonine glycosylation. The segment covering 83-124 has biased composition (low complexity); that stretch reads AQATDSQAQATTTATPTSSEKISSSASKTSTNATSSSCATPS. The disordered stretch occupies residues 83-127; the sequence is AQATDSQAQATTTATPTSSEKISSSASKTSTNATSSSCATPSLKD. O-linked (Man) serine glycans are attached at residues Ser105, Ser106, Ser107, and Ser109. Thr111 carries O-linked (Man) threonine glycosylation. O-linked (Man) serine glycosylation is present at Ser112. Thr113 carries an O-linked (Man) threonine glycan. A glycan (N-linked (GlcNAc...) asparagine) is linked at Asn114. Thr116 is a glycosylation site (O-linked (Man) threonine). Residues Ser117 and Ser118 are each glycosylated (O-linked (Man) serine).

It belongs to the PIR protein family. Post-translationally, covalently linked to beta-1,3-glucan of the inner cell wall layer via an alkali-sensitive ester linkage between the gamma-carboxyl group of glutamic acid, arising from Gln-74 within the PIR1/2/3 repeat, and hydroxyl groups of glucoses of beta-1,3-glucan chains. In terms of processing, extensively O-mannosylated. Also N-glycosylated.

The protein localises to the secreted. It localises to the cell wall. Functionally, component of the outer cell wall layer. Required for stability of the cell wall and for optimal growth. Required for resistance against several antifungal and cell wall-perturbing agents. This Saccharomyces cerevisiae (strain ATCC 204508 / S288c) (Baker's yeast) protein is Cell wall mannoprotein CIS3 (CIS3).